Here is a 151-residue protein sequence, read N- to C-terminus: Neuroglobin (151 aa).

A Globin domain is found at 1-149 (MERPEPELIR…VVQAMSRGWD (149 aa)). Residues His-64 and His-96 each contribute to the heme b site.

This sequence belongs to the globin family. As to quaternary structure, monomer. Homodimer and homotetramer; disulfide-linked. Mainly monomeric but also detected as part of homodimers and homotetramers. Interacts with 14-3-3 proteins; regulates the phosphorylation of NGB. Could interact (ferrous form) with G-alpha(i) proteins (GTP-bound form). In terms of processing, phosphorylated during hypoxia by ERK1/ERK2. Phosphorylation regulates the heme pocket hexacoordination preventing the association of His-64 with the heme metal center. Thereby, promotes the access of dioxygen and nitrite to the heme and stimulates the nitrite reductase activity. Phosphorylation during hypoxia is stabilized by 14-3-3 proteins.

It is found in the cytoplasm. The protein localises to the cytosol. Its subcellular location is the mitochondrion matrix. The catalysed reaction is Fe(III)-heme b-[protein] + nitric oxide + H2O = Fe(II)-heme b-[protein] + nitrite + 2 H(+). Monomeric globin with a bis-histidyl six-coordinate heme-iron atom through which it can bind dioxygen, carbon monoxide and nitric oxide. Could help transport oxygen and increase its availability to the metabolically active neuronal tissues, though its low quantity in tissues as well as its high affinity for dioxygen, which may limit its oxygen-releasing ability, argue against it. The ferrous/deoxygenated form exhibits a nitrite reductase activity and it could produce nitric oxide which in turn inhibits cellular respiration in response to hypoxia. In its ferrous/deoxygenated state, it may also exhibit GDI (Guanine nucleotide Dissociation Inhibitor) activity toward heterotrimeric G-alpha proteins, thereby regulating signal transduction to facilitate neuroprotective responses in the wake of hypoxia and associated oxidative stress. The polypeptide is Neuroglobin (Macaca mulatta (Rhesus macaque)).